We begin with the raw amino-acid sequence, 612 residues long: MPSYRSRISTHGRNMAGARGLWRATGMKDADFGKPIIAIANSFTQFVPGHVHLKDLGQLVAQQIEIAGGVAKEFNTIAVDDGIAMGHDGMLYSLPSREIIADSVEYMVNAHCADALVCISNCDKITPGMLMAALRLNIPTIFVSGGPMEAGKIKWKDQDLRVDLVDAMIAAASEHNSEEEVAEMERAACPTCGSCSGMFTANSMNCLTEALGLSLPGNGSVLATHRDRRMLFEEAGRQIVALVKRYYEKDDETVLPRSIASRKAFENAMTVDIAMGGSTNTVLHLLAAAQEGEVDFTMTDIDHLSRRVPVLCKVAPAVANVHMEDVHRAGGIMGLLGELDAAGLIDTSTYTVHAKTMKEALDHWDIKQTNEPTVCAFYRAAPGGIPTQRAFSQSCRYETLDLDRAKGVIRDKEHAYSQDGGLAVLYGNLAKDGCIVKTAGVDQSILTFKGPARIFESQDSAVSAILNDKIKTGEIVLIRYEGPRGGPGMQEMLYPTSYLKSKGLGKVCALVTDGRFSGGSSGLSIGHVSPEAAEGGEIALVEEGDIIEIDIPNRSIHMLVDDVEMKQRRAKMAAKGNGAWQPIEKRQRKVSKALKAYAAMTTSAAKGAVRNI.

Aspartate 81 is a binding site for Mg(2+). Cysteine 122 contributes to the [2Fe-2S] cluster binding site. Residues aspartate 123 and lysine 124 each coordinate Mg(2+). Lysine 124 carries the N6-carboxylysine modification. A [2Fe-2S] cluster-binding site is contributed by cysteine 195. Position 491 (glutamate 491) interacts with Mg(2+). Residue serine 517 is the Proton acceptor of the active site.

This sequence belongs to the IlvD/Edd family. As to quaternary structure, homodimer. [2Fe-2S] cluster serves as cofactor. It depends on Mg(2+) as a cofactor.

The catalysed reaction is (2R)-2,3-dihydroxy-3-methylbutanoate = 3-methyl-2-oxobutanoate + H2O. It carries out the reaction (2R,3R)-2,3-dihydroxy-3-methylpentanoate = (S)-3-methyl-2-oxopentanoate + H2O. The protein operates within amino-acid biosynthesis; L-isoleucine biosynthesis; L-isoleucine from 2-oxobutanoate: step 3/4. Its pathway is amino-acid biosynthesis; L-valine biosynthesis; L-valine from pyruvate: step 3/4. In terms of biological role, functions in the biosynthesis of branched-chain amino acids. Catalyzes the dehydration of (2R,3R)-2,3-dihydroxy-3-methylpentanoate (2,3-dihydroxy-3-methylvalerate) into 2-oxo-3-methylpentanoate (2-oxo-3-methylvalerate) and of (2R)-2,3-dihydroxy-3-methylbutanoate (2,3-dihydroxyisovalerate) into 2-oxo-3-methylbutanoate (2-oxoisovalerate), the penultimate precursor to L-isoleucine and L-valine, respectively. This Bartonella tribocorum (strain CIP 105476 / IBS 506) protein is Dihydroxy-acid dehydratase.